We begin with the raw amino-acid sequence, 305 residues long: Probable cell division protein WhiA (305 aa).

Positions 272-305 (SIQQLADSLTVPITKSGVNHRLRKINKIADELTD) form a DNA-binding region, H-T-H motif.

This sequence belongs to the WhiA family.

Involved in cell division and chromosome segregation. This Streptococcus suis (strain 98HAH33) protein is Probable cell division protein WhiA.